We begin with the raw amino-acid sequence, 842 residues long: MSRPLSDQDKRKQISVRGLAGVENVSELKKNFNRHLHFTLVKDRNVATPRDYYFALAHTVRDHLVGRWIRTQQHYYEKDPKRIYYLSLEFYMGRTLQNTMVNLALENACDEATYQLGLDMEELEEIEEDAGLGNGGLGRLAACFLDSMATLGLAAYGYGIRYEFGIFNQKICGGWQMEEADDWLRYGNPWEKARPEFTLPVHFYGRVEHTSQGAKWVDTQVVLAMPYDTPVPGYRNNVVNTMRLWSAKAPNDFNLKDFNVGGYIQAVLDRNLAENISRVLYPNDNFFEGKELRLKQEYFVVAATLQDIIRRFKSSKFGSRDPVRTNFDAFPDKVAIQLNDTHPSLAIPELMRILVDLERLDWDKAWDVTVKTCAYTNHTVLPEALERWPVHLMETLLPRHLQIIYEINQRFLNRVAAAFPGDVDRLRRMSLVEEGAVKRINMAHLCIAGSHAVNGVARIHSEILKKTIFKDFYELEPHKFQNKTNGITPRRWLVLCNPGLAEVIAERIGEDYISDLDQLRKLLSYVDDEAFIRDVAKVKQENKLKFSAYLEREYKVHINPNSLFDVQVKRIHEYKRQLLNCLHIITLYNRIKREPNRFMVPRTIMIGGKAAPGYHMAKMIIKLITAIGDVVNHDPAVGDRLRVIFLENYRVSLAEKVIPAADLSEQISTAGTEASGTGNMKFMLNGALTIGTMDGANVEMAEEAGEENFFIFGMRVEDVERLDQRGYNAQEYYDRIPELRQIIEQLSSGFFSPKQPDLFKDIVNMLMHHDRFKVFADYEEYIKCQDKVSELYKNPREWTRMVIRNIATSGKFSSDRTIAQYAREIWGVEPSRQRLPAPDEKI.

Ser2 is subject to N-acetylserine. At Ser15 the chain carries Phosphoserine; by PHK; in form phosphorylase A. 2 residues coordinate AMP: Asp43 and Tyr76. Residues Tyr204 and Tyr227 each carry the phosphotyrosine modification. 310 to 319 (RRFKSSKFGS) is an AMP binding site. Ser430 carries the phosphoserine modification. At Tyr473 the chain carries Phosphotyrosine. The residue at position 514 (Ser514) is a Phosphoserine. Lys681 is subject to N6-(pyridoxal phosphate)lysine. 2 positions are modified to phosphoserine: Ser747 and Ser748.

It belongs to the glycogen phosphorylase family. Homodimer. Homotetramer; to form the enzymatically active phosphorylase A. Pyridoxal 5'-phosphate is required as a cofactor. In terms of processing, phosphorylation of Ser-15 converts phosphorylase B (unphosphorylated) to phosphorylase A.

It catalyses the reaction [(1-&gt;4)-alpha-D-glucosyl](n) + phosphate = [(1-&gt;4)-alpha-D-glucosyl](n-1) + alpha-D-glucose 1-phosphate. Allosterically regulated through the non-covalent binding of metabolites, being activated by AMP and inhibited by ATP, ADP, and glucose-6-phosphate. The activity is also controlled by post-translational modifications including phosphorylation. Allosteric enzyme that catalyzes the rate-limiting step in glycogen catabolism, the phosphorolytic cleavage of glycogen to produce glucose-1-phosphate, and plays a central role in maintaining cellular and organismal glucose homeostasis. The sequence is that of Glycogen phosphorylase, muscle form from Mus musculus (Mouse).